The following is a 128-amino-acid chain: Cystatin-12 (128 aa).

An N-terminal signal peptide occupies residues 1 to 21 (MLWKSVLSVALIVLGIHDCSF). Intrachain disulfides connect Cys82–Cys92 and Cys105–Cys125. N-linked (GlcNAc...) asparagine glycosylation occurs at Asn122.

This sequence belongs to the cystatin family. As to expression, located at the very proximal caput epididymis (at protein level). Expressed in epididymis, Sertoli cells and testis. Also found to be weakly expressed in ovary and prostate.

The protein resides in the secreted. Functionally, may play a specialized role in spermatogenesis. In Mus musculus (Mouse), this protein is Cystatin-12 (Cst12).